The sequence spans 150 residues: Large ribosomal subunit protein bL9 (150 aa).

The protein belongs to the bacterial ribosomal protein bL9 family.

Functionally, binds to the 23S rRNA. The sequence is that of Large ribosomal subunit protein bL9 from Sodalis glossinidius (strain morsitans).